The chain runs to 188 residues: MATTADFRNGMCLEIEGQYYFIVEFLHVKPGKGPAFVRTKLKNVATGRILDKTWNSGVKVEEVRIERRPYQYLYQDEMGYNFMHPETFEQITIPGASIDGVQFLKDGDMVEAMVHATSETVLTCELPPHVKLRVTYTEPGLKGDTATNTLKPATVETGAEVRVPLFIQEGELIEVDTRDGSYIGRVKE.

It belongs to the elongation factor P family.

It is found in the cytoplasm. The protein operates within protein biosynthesis; polypeptide chain elongation. In terms of biological role, involved in peptide bond synthesis. Stimulates efficient translation and peptide-bond synthesis on native or reconstituted 70S ribosomes in vitro. Probably functions indirectly by altering the affinity of the ribosome for aminoacyl-tRNA, thus increasing their reactivity as acceptors for peptidyl transferase. The chain is Elongation factor P 1 (efp1) from Porphyromonas gingivalis (strain ATCC BAA-308 / W83).